An 881-amino-acid polypeptide reads, in one-letter code: DNA replication helicase (881 aa).

90 to 97 (GNAGSGKS) provides a ligand contact to ATP.

This sequence belongs to the herpesviridae helicase family. In terms of assembly, associates with the primase and the primase-associated factor to form the helicase-primase complex.

The protein resides in the host nucleus. Functionally, component of the helicase/primase complex. Unwinds the DNA at the replication forks and generates single-stranded DNA for both leading and lagging strand synthesis. The primase synthesizes short RNA primers on the lagging strand that the polymerase elongates using dNTPs. Possesses helicase-like motifs and therefore may act as the helicase subunit of the complex. The chain is DNA replication helicase from Homo sapiens (Human).